The sequence spans 273 residues: Large ribosomal subunit protein uL2 (273 aa).

A disordered region spans residues 222–273; it reads GVAMNPVDHPMGGGEGRSSGGRHPCTPWGVPTKGYRTRKSKRSDKLIVHRRK. The segment covering 264 to 273 has biased composition (basic and acidic residues); the sequence is SDKLIVHRRK.

The protein belongs to the universal ribosomal protein uL2 family. In terms of assembly, part of the 50S ribosomal subunit. Forms a bridge to the 30S subunit in the 70S ribosome.

In terms of biological role, one of the primary rRNA binding proteins. Required for association of the 30S and 50S subunits to form the 70S ribosome, for tRNA binding and peptide bond formation. It has been suggested to have peptidyltransferase activity; this is somewhat controversial. Makes several contacts with the 16S rRNA in the 70S ribosome. This is Large ribosomal subunit protein uL2 from Syntrophobacter fumaroxidans (strain DSM 10017 / MPOB).